The sequence spans 269 residues: Shikimate dehydrogenase (NADP(+)) (269 aa).

Residues 22–24 (TLS) and threonine 68 contribute to the shikimate site. Lysine 72 serves as the catalytic Proton acceptor. Shikimate is bound by residues asparagine 93 and aspartate 104. NADP(+) contacts are provided by residues 128–132 (GAGGA), 152–157 (NRTKSR), and phenylalanine 210. Shikimate is bound at residue tyrosine 212. An NADP(+)-binding site is contributed by glycine 233.

It belongs to the shikimate dehydrogenase family. As to quaternary structure, homodimer.

It catalyses the reaction shikimate + NADP(+) = 3-dehydroshikimate + NADPH + H(+). The protein operates within metabolic intermediate biosynthesis; chorismate biosynthesis; chorismate from D-erythrose 4-phosphate and phosphoenolpyruvate: step 4/7. In terms of biological role, involved in the biosynthesis of the chorismate, which leads to the biosynthesis of aromatic amino acids. Catalyzes the reversible NADPH linked reduction of 3-dehydroshikimate (DHSA) to yield shikimate (SA). In Saccharolobus solfataricus (strain ATCC 35092 / DSM 1617 / JCM 11322 / P2) (Sulfolobus solfataricus), this protein is Shikimate dehydrogenase (NADP(+)).